A 127-amino-acid polypeptide reads, in one-letter code: MTAHTHDGTRTWRTGRQATTLLALLAGVFGGAASCAAPIQADMMGNAFLTALTNAGIAYDQPATTVALGRSVCPMVVAPGGTFESITSRMAEINGMSRDMASTFTIVAIGTYCPAVIAPLMPNRLQA.

A signal peptide spans 1–34 (MTAHTHDGTRTWRTGRQATTLLALLAGVFGGAAS). C35 carries N-palmitoyl cysteine lipidation. The S-diacylglycerol cysteine moiety is linked to residue C35. The Extracellular segment spans residues 35–99 (CAAPIQADMM…MAEINGMSRD (65 aa)). A helical transmembrane segment spans residues 100–120 (MASTFTIVAIGTYCPAVIAPL). At 121–127 (MPNRLQA) the chain is on the cytoplasmic side.

May interact with sensor protein KdpD. Post-translationally, modified by Lgt on Cys-35 with an S-linked diacylglycerol, signal peptide is removed by LspA, modified by Lnt with amide-linked fatty acid.

The protein resides in the cell membrane. Its function is as follows. Overexpression induces expression of sensor protein kdpD gene at low K(+) concentrations (0 and 250 uM, tested in M.smegatis). This is Putative lipoprotein LprJ (lprJ) from Mycobacterium tuberculosis (strain ATCC 25618 / H37Rv).